Here is a 72-residue protein sequence, read N- to C-terminus: V-type proton ATPase subunit e (72 aa).

Residues Met1–Ser2 lie on the Lumenal side of the membrane. A helical membrane pass occupies residues Phe3–Leu23. The Cytoplasmic segment spans residues Ala24–Ser34. Residues Thr35 to Leu55 form a helical membrane-spanning segment. At His56–Glu72 the chain is on the lumenal side.

It belongs to the V-ATPase e1/e2 subunit family. In terms of assembly, V-ATPase is a heteromultimeric enzyme composed of a peripheral catalytic V1 complex (components A to H) attached to an integral membrane V0 proton pore complex (components: a, c, c', c'', d, e, f and VOA1).

Its subcellular location is the vacuole membrane. Functionally, subunit of the V0 complex of vacuolar(H+)-ATPase (V-ATPase), a multisubunit enzyme composed of a peripheral complex (V1) that hydrolyzes ATP and a membrane integral complex (V0) that translocates protons. V-ATPase is responsible for acidifying and maintaining the pH of intracellular compartments. The protein is V-type proton ATPase subunit e (VMA9) of Eremothecium gossypii (strain ATCC 10895 / CBS 109.51 / FGSC 9923 / NRRL Y-1056) (Yeast).